Reading from the N-terminus, the 44-residue chain is Unknown protein 9 (44 aa).

The chain is Unknown protein 9 from Pseudotsuga menziesii (Douglas-fir).